The following is a 639-amino-acid chain: Pheromone-processing carboxypeptidase kex1 (639 aa).

The N-terminal stretch at 1-30 (MAFSHAPSGWRTALLAGLIATVAWLPAIVA) is a signal peptide. The Lumenal portion of the chain corresponds to 31 to 517 (QEKTQADYFI…KAAEWKAYTR (487 aa)). A glycan (N-linked (GlcNAc...) asparagine) is linked at Asn119. Residues Ser183 and Asp384 contribute to the active site. 2 N-linked (GlcNAc...) asparagine glycosylation sites follow: Asn435 and Asn443. The active site involves His446. The tract at residues 477–504 (DSLIDGEKGPLTSVGDHPNSTKAEEDKS) is disordered. A glycan (N-linked (GlcNAc...) asparagine) is linked at Asn495. The helical transmembrane segment at 518–538 (SGEVALVIAVIVACICGFLLC) threads the bilayer. The Cytoplasmic segment spans residues 539–639 (RSRRAKSAYK…DRGRRKEESR (101 aa)). Residues 580 to 639 (ADFDERELDEVPKKSGKGYGQISSEKGRVPHNDSSFSLGVDSDDDEAGSSDRGRRKEESR) form a disordered region. Over residues 628–639 (SSDRGRRKEESR) the composition is skewed to basic and acidic residues.

Belongs to the peptidase S10 family.

The protein localises to the golgi apparatus. It is found in the trans-Golgi network membrane. It carries out the reaction Preferential release of a C-terminal arginine or lysine residue.. Its function is as follows. Protease with a carboxypeptidase B-like function involved in the C-terminal processing of the lysine and arginine residues from protein precursors. Promotes cell fusion and is involved in the programmed cell death. The sequence is that of Pheromone-processing carboxypeptidase kex1 (kex1) from Pyrenophora tritici-repentis (strain Pt-1C-BFP) (Wheat tan spot fungus).